Consider the following 394-residue polypeptide: Elongation factor Tu (394 aa).

One can recognise a tr-type G domain in the interval 10 to 204; it reads KPHVNVGTIG…AVDEWIPTPE (195 aa). The G1 stretch occupies residues 19–26; the sequence is GHIDHGKT. 19–26 provides a ligand contact to GTP; that stretch reads GHIDHGKT. Thr26 serves as a coordination point for Mg(2+). The G2 stretch occupies residues 60–64; the sequence is GITIN. Residues 81-84 form a G3 region; the sequence is DCPG. GTP-binding positions include 81 to 85 and 136 to 139; these read DCPGH and NKCD. Residues 136–139 form a G4 region; the sequence is NKCD. The G5 stretch occupies residues 174–176; the sequence is SAL.

It belongs to the TRAFAC class translation factor GTPase superfamily. Classic translation factor GTPase family. EF-Tu/EF-1A subfamily. In terms of assembly, monomer.

It localises to the cytoplasm. It catalyses the reaction GTP + H2O = GDP + phosphate + H(+). GTP hydrolase that promotes the GTP-dependent binding of aminoacyl-tRNA to the A-site of ribosomes during protein biosynthesis. The chain is Elongation factor Tu from Mycoplasma pneumoniae (strain ATCC 29342 / M129 / Subtype 1) (Mycoplasmoides pneumoniae).